Here is a 235-residue protein sequence, read N- to C-terminus: Hydroxyacylglutathione hydrolase (235 aa).

His53, His55, Asp57, His58, His109, Asp127, and His165 together coordinate Zn(2+).

Belongs to the metallo-beta-lactamase superfamily. Glyoxalase II family. As to quaternary structure, monomer. Zn(2+) serves as cofactor.

The catalysed reaction is an S-(2-hydroxyacyl)glutathione + H2O = a 2-hydroxy carboxylate + glutathione + H(+). It functions in the pathway secondary metabolite metabolism; methylglyoxal degradation; (R)-lactate from methylglyoxal: step 2/2. Functionally, thiolesterase that catalyzes the hydrolysis of S-D-lactoyl-glutathione to form glutathione and D-lactic acid. This Glaesserella parasuis serovar 5 (strain SH0165) (Haemophilus parasuis) protein is Hydroxyacylglutathione hydrolase.